A 320-amino-acid chain; its full sequence is Glucokinase (320 aa).

Belongs to the ROK (NagC/XylR) family. Monomer. It depends on a divalent metal cation as a cofactor.

The catalysed reaction is D-glucose + ATP = D-glucose 6-phosphate + ADP + H(+). Catalyzes the phosphorylation of D-glucose to D-glucose 6-phosphate using ATP as the phosphate donor. ITP can also serve as an effective phosphoryl donor. According to Hansen et al., the enzyme has a broad hexose specificity, and in addition to glucose, which shows the highest catalytic efficiency, it can also phosphorylate fructose, mannose, glucosamine, N-acetylglucosamine, N-acetylmannosamine and 2-deoxyglucose. However, according to Sakuraba et al., the enzyme shows strict specificity for D-glucose. This Aeropyrum pernix (strain ATCC 700893 / DSM 11879 / JCM 9820 / NBRC 100138 / K1) protein is Glucokinase.